A 466-amino-acid polypeptide reads, in one-letter code: Alpha-1,3-mannosyltransferase CMT1 (466 aa).

The disordered stretch occupies residues 1–23 (MFRNTLRTFPRPATPSLPTSSHS). At 1–33 (MFRNTLRTFPRPATPSLPTSSHSPIARASLSKS) the chain is on the cytoplasmic side. A helical; Signal-anchor for type II membrane protein membrane pass occupies residues 34-54 (PLFVLSLVLVCIFFLSFLSHP). Over 55–466 (DPSARKLQWP…ETRWVQPWLE (412 aa)) the chain is Lumenal.

Mg(2+) serves as cofactor. The cofactor is Mn(2+). Co(2+) is required as a cofactor.

It is found in the golgi apparatus membrane. It participates in protein modification; protein glycosylation. Responsible for addition of mannose residues in an alpha-1,3 linkage to a polymannosly precursor. May be involved in synthesis of capsule glucuronoxylomannan. The protein is Alpha-1,3-mannosyltransferase CMT1 of Cryptococcus neoformans var. neoformans serotype D (strain JEC21 / ATCC MYA-565) (Filobasidiella neoformans).